A 397-amino-acid polypeptide reads, in one-letter code: Elongation factor Tu-2 (397 aa).

The tr-type G domain occupies 10–206; the sequence is KPHVNIGTIG…AVDEFVPEPV (197 aa). A G1 region spans residues 19 to 26; it reads GHIDHGKT. 19-26 serves as a coordination point for GTP; that stretch reads GHIDHGKT. Residue Thr-26 participates in Mg(2+) binding. Residues 62–66 are G2; the sequence is GITIS. A G3 region spans residues 83–86; that stretch reads DCPG. Residues 83–87 and 138–141 contribute to the GTP site; these read DCPGH and NKTD. The tract at residues 138-141 is G4; it reads NKTD. The segment at 176–178 is G5; it reads SAL.

This sequence belongs to the TRAFAC class translation factor GTPase superfamily. Classic translation factor GTPase family. EF-Tu/EF-1A subfamily. As to quaternary structure, monomer.

Its subcellular location is the cytoplasm. The catalysed reaction is GTP + H2O = GDP + phosphate + H(+). Its function is as follows. GTP hydrolase that promotes the GTP-dependent binding of aminoacyl-tRNA to the A-site of ribosomes during protein biosynthesis. This is Elongation factor Tu-2 from Streptomyces ramocissimus.